The sequence spans 72 residues: Aurein-2.3 (72 aa).

A signal peptide spans 1-22 (MAFLKKSLFLVLFLGLVSLSIC). A propeptide spanning residues 23–49 (EKEKRQNGEDEDENEAANHEEGSEEKR) is cleaved from the precursor. The tract at residues 27–47 (RQNGEDEDENEAANHEEGSEE) is disordered. Basic and acidic residues predominate over residues 38 to 47 (AANHEEGSEE). Leucine 65 carries the leucine amide modification. The propeptide occupies 69 to 72 (NDVE).

In terms of processing, amidation is essential for antibacterial activity against Gram-positive bacteria. Expressed by the skin dorsal glands.

The protein localises to the secreted. Its subcellular location is the target cell membrane. Its function is as follows. Amphipathic alpha-helical antimicrobial peptide with weak to moderate activity against Gram-positive bacteria, and no activity against Gram-negative bacteria. Probably acts by disturbing membrane functions with its amphipathic structure. Strongly inhibits the formation of NO by neuronal nitric oxide synthase (nNOS) at micromolar concentrations. Acts by a non-competitive mechanism, probably by binding to calcium/calmodulin and as a consequence blocking calmodulin attachment to nNOS. The chain is Aurein-2.3 from Ranoidea aurea (Green and golden bell frog).